We begin with the raw amino-acid sequence, 510 residues long: NAD(P)H-quinone oxidoreductase subunit 2 B, chloroplastic (510 aa).

Transmembrane regions (helical) follow at residues 24–44, 57–77, 99–119, 124–144, 149–169, 183–203, 227–247, 295–315, 323–343, 354–374, 395–415, 428–448, and 484–504; these read LLLF…GLIL, IPWF…ALLF, IFQF…VEYI, MAIT…MFLC, LITI…LSGY, YLLM…WLYG, PGIL…LSLA, WHLL…LIAI, MLAY…IVGD, YMLF…LFGL, ALSL…AGFF, GLYF…YYYL, and MIVC…IIAI.

The protein belongs to the complex I subunit 2 family. As to quaternary structure, NDH is composed of at least 16 different subunits, 5 of which are encoded in the nucleus.

The protein localises to the plastid. The protein resides in the chloroplast thylakoid membrane. It carries out the reaction a plastoquinone + NADH + (n+1) H(+)(in) = a plastoquinol + NAD(+) + n H(+)(out). The catalysed reaction is a plastoquinone + NADPH + (n+1) H(+)(in) = a plastoquinol + NADP(+) + n H(+)(out). Functionally, NDH shuttles electrons from NAD(P)H:plastoquinone, via FMN and iron-sulfur (Fe-S) centers, to quinones in the photosynthetic chain and possibly in a chloroplast respiratory chain. The immediate electron acceptor for the enzyme in this species is believed to be plastoquinone. Couples the redox reaction to proton translocation, and thus conserves the redox energy in a proton gradient. This is NAD(P)H-quinone oxidoreductase subunit 2 B, chloroplastic from Eucalyptus globulus subsp. globulus (Tasmanian blue gum).